Here is a 156-residue protein sequence, read N- to C-terminus: Protein SprT (156 aa).

Positions 15–153 constitute a SprT-like domain; it reads NRYFNKHFTP…CKKCKEILVL (139 aa). Residue H67 participates in Zn(2+) binding. E68 is a catalytic residue. Position 71 (H71) interacts with Zn(2+).

This sequence belongs to the SprT family. It depends on Zn(2+) as a cofactor.

It is found in the cytoplasm. The chain is Protein SprT from Glaesserella parasuis serovar 5 (strain SH0165) (Haemophilus parasuis).